We begin with the raw amino-acid sequence, 424 residues long: Enolase (424 aa).

Gln-163 is a binding site for (2R)-2-phosphoglycerate. The active-site Proton donor is Glu-204. Residues Asp-241, Glu-284, and Asp-311 each coordinate Mg(2+). Residues Lys-336, Arg-365, Ser-366, and Lys-387 each contribute to the (2R)-2-phosphoglycerate site. Lys-336 serves as the catalytic Proton acceptor.

It belongs to the enolase family. Requires Mg(2+) as cofactor.

The protein localises to the cytoplasm. The protein resides in the secreted. Its subcellular location is the cell surface. It carries out the reaction (2R)-2-phosphoglycerate = phosphoenolpyruvate + H2O. It participates in carbohydrate degradation; glycolysis; pyruvate from D-glyceraldehyde 3-phosphate: step 4/5. In terms of biological role, catalyzes the reversible conversion of 2-phosphoglycerate (2-PG) into phosphoenolpyruvate (PEP). It is essential for the degradation of carbohydrates via glycolysis. The sequence is that of Enolase from Dictyoglomus turgidum (strain DSM 6724 / Z-1310).